The sequence spans 495 residues: tRNA (guanine-N(7)-)-methyltransferase non-catalytic subunit trm82 (495 aa).

The tract at residues 51-100 (ANTAEAKAAPSTTGEEPPEKRRKVSPPPDQKPEDSEPASQKSRKPEASPA) is disordered. WD repeat units lie at residues 99 to 139 (PAWS…ALKQ), 245 to 290 (SMLT…HIIE), and 295 to 337 (GHTS…QKVP).

The protein belongs to the WD repeat TRM82 family. In terms of assembly, forms a heterodimer with the catalytic subunit trm8.

The protein localises to the nucleus. It participates in tRNA modification; N(7)-methylguanine-tRNA biosynthesis. Its function is as follows. Required for the formation of N(7)-methylguanine at position 46 (m7G46) in tRNA. In the complex, it is required to stabilize and induce conformational changes of the catalytic subunit. The polypeptide is tRNA (guanine-N(7)-)-methyltransferase non-catalytic subunit trm82 (trm82) (Aspergillus clavatus (strain ATCC 1007 / CBS 513.65 / DSM 816 / NCTC 3887 / NRRL 1 / QM 1276 / 107)).